A 349-amino-acid chain; its full sequence is Thioredoxin reductase, mitochondrial (349 aa).

The N-terminal 30 residues, 1-30, are a transit peptide targeting the mitochondrion; it reads MLLVRNSTLGRLSSLRGFFRNINESNIFYR. Residues 41–44, 70–71, Gln75, Asn84, Val117, Cys175, Asp318, and 325–327 each bind FAD; these read SGPA, IA, and RQA. Cys172 and Cys175 are oxidised to a cystine.

It belongs to the class-II pyridine nucleotide-disulfide oxidoreductase family. Homodimer. It depends on FAD as a cofactor.

The protein resides in the mitochondrion. The catalysed reaction is [thioredoxin]-dithiol + NADP(+) = [thioredoxin]-disulfide + NADPH + H(+). This chain is Thioredoxin reductase, mitochondrial (TRR1), found in Kluyveromyces lactis (strain ATCC 8585 / CBS 2359 / DSM 70799 / NBRC 1267 / NRRL Y-1140 / WM37) (Yeast).